Consider the following 277-residue polypeptide: Small ribosomal subunit protein uS2 (277 aa).

The tract at residues 247-277 is disordered; the sequence is LSAFESSQDDESDEENREEDLLAKKFDGEAN. Over residues 253–264 the composition is skewed to acidic residues; it reads SQDDESDEENRE. Residues 265-277 show a composition bias toward basic and acidic residues; it reads EDLLAKKFDGEAN.

The protein belongs to the universal ribosomal protein uS2 family.

The chain is Small ribosomal subunit protein uS2 (rpsB) from Chlamydia pneumoniae (Chlamydophila pneumoniae).